The following is a 235-amino-acid chain: Small ribosomal subunit protein uS10m (235 aa).

A mitochondrion-targeting transit peptide spans 1–19 (MLRTSVRSPLLYRCLSKRF).

It belongs to the universal ribosomal protein uS10 family. Part of the mitochondrial small ribosomal subunit.

Its subcellular location is the mitochondrion. In terms of biological role, involved in mitochondrial genome encoded proteins translation. Involved in the binding of tRNA to the ribosomes. This Candida glabrata (strain ATCC 2001 / BCRC 20586 / JCM 3761 / NBRC 0622 / NRRL Y-65 / CBS 138) (Yeast) protein is Small ribosomal subunit protein uS10m (RSM10).